Reading from the N-terminus, the 141-residue chain is Nucleoside diphosphate kinase (141 aa).

ATP is bound by residues lysine 11, phenylalanine 59, arginine 87, threonine 93, arginine 104, and asparagine 114. Histidine 117 serves as the catalytic Pros-phosphohistidine intermediate.

This sequence belongs to the NDK family. In terms of assembly, homotetramer. Mg(2+) is required as a cofactor.

It localises to the cytoplasm. The catalysed reaction is a 2'-deoxyribonucleoside 5'-diphosphate + ATP = a 2'-deoxyribonucleoside 5'-triphosphate + ADP. It carries out the reaction a ribonucleoside 5'-diphosphate + ATP = a ribonucleoside 5'-triphosphate + ADP. Major role in the synthesis of nucleoside triphosphates other than ATP. The ATP gamma phosphate is transferred to the NDP beta phosphate via a ping-pong mechanism, using a phosphorylated active-site intermediate. This Vibrio vulnificus (strain CMCP6) protein is Nucleoside diphosphate kinase.